Reading from the N-terminus, the 188-residue chain is Protein SYC1 (188 aa).

Component of the cleavage and polyadenylation factor (CPF) complex, which is composed of at least PTI1, SYC1, SSU72, GLC7, MPE1, REF2, PFS2, PTA1, YSH1/BRR5, SWD2, CFT2/YDH1, YTH1, CFT1/YHH1, FIP1 and PAP1. Component of the APT complex, which is a subcomplex of CPF, and is composed of PTI1, SYC1, SSU72, GLC7, REF2, PTA1 and SWD2.

It localises to the nucleus. In terms of biological role, component of the cleavage and polyadenylation factor (CPF) complex, which plays a key role in polyadenylation-dependent pre-mRNA 3'-end formation and cooperates with cleavage factors including the CFIA complex and NAB4/CFIB. Component of the APT complex, which may be involved in polyadenylation-independent transcript 3'-end formation, including snoRNAs and snRNAs. This chain is Protein SYC1 (SYC1), found in Saccharomyces cerevisiae (strain ATCC 204508 / S288c) (Baker's yeast).